A 187-amino-acid chain; its full sequence is GTPase KRas (187 aa).

GTP-binding positions include 10-18 (GAVGVGKSA), 29-35 (VDEYDPT), 59-60 (AG), and 116-119 (NKCA). Positions 32–40 (YDPTIEDSY) match the Effector region motif. Positions 168–187 (EKMSKDGKKKKKSKTKCSIL) are disordered. Cys-184 carries the cysteine methyl ester modification. Cys-184 carries the S-farnesyl cysteine lipid modification. A propeptide spans 185-187 (SIL) (removed in mature form).

The protein belongs to the small GTPase superfamily. Ras family.

It is found in the cell membrane. Its subcellular location is the cytoplasm. It catalyses the reaction GTP + H2O = GDP + phosphate + H(+). Its activity is regulated as follows. Alternates between an inactive form bound to GDP and an active form bound to GTP. Activated by a guanine nucleotide-exchange factor (GEF) and inactivated by a GTPase-activating protein (GAP). Functionally, ras proteins bind GDP/GTP and possess intrinsic GTPase activity. Plays an important role in the regulation of cell proliferation. The chain is GTPase KRas (kras) from Xenopus laevis (African clawed frog).